We begin with the raw amino-acid sequence, 569 residues long: Linoleate hydratase (569 aa).

Tyr87 contributes to the FAD binding site. Tyr205 (proton donor) is an active-site residue. Val254, Ser300, and Thr524 together coordinate FAD.

The protein belongs to the oleate hydratase family. FAD serves as cofactor.

The protein resides in the cell membrane. The protein localises to the cytoplasm. It catalyses the reaction (9Z,12Z)-octadecadienoate + H2O = (10S)-hydroxy-(12Z)-octadecenoate. The enzyme catalyses (10E,12Z)-octadecadienoate + H2O = (10S)-hydroxy-(12Z)-octadecenoate. The catalysed reaction is (9Z)-octadecenoate + H2O = 10-hydroxyoctadecanoate. It carries out the reaction (10E)-octadecenoate + H2O = 10-hydroxyoctadecanoate. It catalyses the reaction (9E,11E)-octadecadienoate + H2O = 10-hydroxy-(11E)-octadecenoate. The enzyme catalyses (9Z,11E)-octadecadienoate + H2O = 10-hydroxy-(11E)-octadecenoate. The catalysed reaction is (9Z)-hexadecenoate + H2O = 10-hydroxyhexadecanoate. It carries out the reaction (9Z,12Z,15Z)-octadecatrienoate + H2O = (10S)-hydroxy-(12Z,15Z)-octadecadienoate. It catalyses the reaction (6Z,9Z,12Z)-octadecatrienoate + H2O = (10S)-hydroxy-(6Z,12Z)-octadecadienoate. The enzyme catalyses (6Z,9Z,12Z,15Z)-octadecatetraenoate + H2O = (10S)-hydroxy-(6Z,12Z,15Z)-octadecatrienoate. The protein operates within lipid metabolism; fatty acid metabolism. Its activity is regulated as follows. The addition of NADH or NADPH highly increases catalytic activity, likely by reducing the cofactor FAD to FADH2. The hydration and dehydration reactions are strongly inhibited by Ag(+), Fe(2+), Cu(2+), Zn(2+), Hg(2+), and Fe(3+). Is involved in a saturation metabolic pathway of polyunsaturated fatty acids, that detoxifies unsaturated fatty acids and generates hydroxy fatty acids, oxo fatty acids, conjugated fatty acids such as conjugated linoleic acids (CLAs), and partially saturated trans-fatty acids as intermediates. CLA-HY catalyzes the hydration and dehydration steps in the production of 10-hydroxy-cis-12-octadecenoate, trans-10,cis-12-CLA, cis-9,trans-11-CLA, trans-9,trans-11-CLA, oleate and trans-10-octadecenoate during linoleate metabolism. Is also able to hydrate palmitoleic acid (cis-9-hexadecenoic acid), oleic acid, alpha-linolenic acid, gamma-linolenic acid, and stearidonic acid into the corresponding 10-hydroxy fatty acids, and dehydrate 10-hydroxy-cis-12,cis-15-octadecadienoic acid, 10-hydroxy-cis-6,cis-12-octadecadienoic acid, and 10-hydroxyoctadecanoic acid into the corresponding fatty acids with cis double bonds at the Delta9 position. As part of the gut microbiome, this enzyme modifies host fatty acid composition and is expected to improve human health by altering lipid metabolism related to the onset of metabolic syndrome. Shows regioselectivity for Delta9 double bond hydration, generating C10 hydroxy groups in the (S)-configuration with high enantioselectivity, when another double bond is in position 12. Is not able to hydrate fatty acids with a trans carbon-carbon double bond at Delta9 position (elaidic acid, trans-9-octadecenoic acid), fatty acid esters (methyl linoleate, monolinolein, dilinolein, and trilinolein), and conjugated fatty acids (conjugated linoleic acids), as well as fatty acids with other chain lengths, such as myristoleic acid (cis-9-tetradecenoic acid), arachidonic acid (cis-5,cis-8,cis-11,cis-14-eicosatetraenoic acid), EPA (cis-5,cis-8,cis-11,cis-14,cis-17-eicosapentaenoic acid), DHA (cis-4,cis-7,cis-10,cis-13,cis-16,cis-19-docosahexaenoic acid) and fatty acids with a cis carbon-carbon double bond at Delta11 position, such as cis-vaccenic acid and cis-11-octadecenoic acid, or fatty alcohols, such as linoleyl alcohol. Is not able to dehydrate 12-hydroxy, 3-hydroxy, and 9-hydroxy fatty acids. This chain is Linoleate hydratase, found in Lactiplantibacillus plantarum (Lactobacillus plantarum).